The following is a 112-amino-acid chain: MPGLVPPPDHSKSLFVLAIGITVVSALFVLKSHTFPIAGDNIHRFPSGGQYKDGTKQINYCPPTHARYPKYPDYKWLAATAAIVIPLCLYISYHPGNNIRRICPCCNTYHHP.

This is an uncharacterized protein from Cymbidium mosaic virus (strain Singapore).